The primary structure comprises 116 residues: Promotilin (116 aa).

An N-terminal signal peptide occupies residues Met1–Ala25. Residues Arg39–Asn74 form a disordered region.

The protein belongs to the motilin family.

Its subcellular location is the secreted. Plays an important role in the regulation of interdigestive gastrointestinal motility and indirectly causes rhythmic contraction of duodenal and colonic smooth muscle. The protein is Promotilin (MLN) of Felis catus (Cat).